The sequence spans 390 residues: uncharacterized protein (390 aa).

A run of 11 helical transmembrane segments spans residues 10 to 30, 43 to 63, 81 to 101, 134 to 154, 162 to 182, 213 to 233, 246 to 266, 272 to 292, 298 to 318, 341 to 361, and 363 to 383; these read LSFCVIFLLRMLGMFMILPIL, FLIGLSMGIYGISQVIFQIPF, FMFFIGNIISASIHSIWGLII, AIGVSFAISFLIAVVSGPIIV, IFWISAFLSIVCMIIVCFFVP, FYLGVFFLHFLLMIKFTMIPN, WKVYLGTILISFFVLFLFIFY, ILENIIEICILFILFSEIIFL, LLFLIISLQIFFISFNFLEVF, TSQFLGIFFGGVFSGWLYSFL, and FSQIFYFELFIILLWLIFSFF.

The protein belongs to the major facilitator superfamily.

Its subcellular location is the cell membrane. This is an uncharacterized protein from Buchnera aphidicola subsp. Acyrthosiphon pisum (strain APS) (Acyrthosiphon pisum symbiotic bacterium).